A 66-amino-acid chain; its full sequence is NSAHPCCDPVTCQPKKGEHCISGPCCRNCKFLNSGTVCKRAVGDDMDDYCSGITTDCPRNPYKGKD.

In terms of domain architecture, Disintegrin spans asparagine 1–lysine 65. 4 cysteine pairs are disulfide-bonded: cysteine 6-cysteine 29, cysteine 20-cysteine 26, cysteine 25-cysteine 50, and cysteine 38-cysteine 57. The short motif at valine 42–aspartate 44 is the Cell attachment site; atypical (VGD) element.

The protein belongs to the disintegrin family. Dimeric disintegrin subfamily. Heterodimer with EO4A or EO5A; disulfide-linked. As to expression, expressed by the venom gland.

It localises to the secreted. Poor inhibitor of platelet aggregation. When it dimerizes with EO4A, it inhibits the adhesion of cells expressing the RGD-dependent integrin alpha-5/beta-1 (ITGA5/ITGB1) to immobilized fibronectin. When it dimerizes with EO5A, it inhibits the adhesion of the alpha-4/beta-1 (ITGA4/ITGB1) integrin to VCAM-1. When it dimerizes either with EO4A or EO5A, the inhibition on alpha-IIb/beta-3 (ITGA2B/ITGB3) is low. This is Disintegrin EO5B from Echis ocellatus (Ocellated saw-scaled viper).